We begin with the raw amino-acid sequence, 81 residues long: Photosystem I iron-sulfur center (81 aa).

2 4Fe-4S ferredoxin-type domains span residues 2–31 (AHSVKIYDTCIGCTQCVRACPTDVLEMVPW) and 39–68 (IASAPRTEDCVGCKRCESACPTDFLSVRVY). Positions 11, 14, 17, 21, 48, 51, 54, and 58 each coordinate [4Fe-4S] cluster.

In terms of assembly, the eukaryotic PSI reaction center is composed of at least 11 subunits. Requires [4Fe-4S] cluster as cofactor.

The protein resides in the plastid. It localises to the chloroplast thylakoid membrane. The enzyme catalyses reduced [plastocyanin] + hnu + oxidized [2Fe-2S]-[ferredoxin] = oxidized [plastocyanin] + reduced [2Fe-2S]-[ferredoxin]. Apoprotein for the two 4Fe-4S centers FA and FB of photosystem I (PSI); essential for photochemical activity. FB is the terminal electron acceptor of PSI, donating electrons to ferredoxin. The C-terminus interacts with PsaA/B/D and helps assemble the protein into the PSI complex. Required for binding of PsaD and PsaE to PSI. PSI is a plastocyanin-ferredoxin oxidoreductase, converting photonic excitation into a charge separation, which transfers an electron from the donor P700 chlorophyll pair to the spectroscopically characterized acceptors A0, A1, FX, FA and FB in turn. The chain is Photosystem I iron-sulfur center from Physcomitrium patens (Spreading-leaved earth moss).